A 213-amino-acid chain; its full sequence is Ribonuclease HII (213 aa).

The RNase H type-2 domain occupies 20-209 (ELVAGVDEVG…VRQAYEALEG (190 aa)). A divalent metal cation contacts are provided by Asp26, Glu27, and Asp118.

It belongs to the RNase HII family. Mn(2+) is required as a cofactor. Mg(2+) serves as cofactor.

It is found in the cytoplasm. It carries out the reaction Endonucleolytic cleavage to 5'-phosphomonoester.. Functionally, endonuclease that specifically degrades the RNA of RNA-DNA hybrids. This is Ribonuclease HII from Pseudomonas fluorescens (strain Pf0-1).